The sequence spans 146 residues: Putative trafficking protein particle complex subunit TRS31 (146 aa).

This sequence belongs to the TRAPP small subunits family. BET3 subfamily. In terms of assembly, part of the multisubunit TRAPP (transport protein particle) complex.

Its subcellular location is the golgi apparatus. It localises to the cis-Golgi network. The protein localises to the endoplasmic reticulum. Functionally, may play a role in vesicular transport from endoplasmic reticulum to Golgi. The sequence is that of Putative trafficking protein particle complex subunit TRS31 (TRS31) from Encephalitozoon cuniculi (strain GB-M1) (Microsporidian parasite).